We begin with the raw amino-acid sequence, 686 residues long: Leucine-rich repeat-containing protein 49 (686 aa).

LRR repeat units lie at residues 113 to 134 (HLRLLNFQHNFITRIQNISNLQ), 135 to 156 (RLIFLDLYDNQIEEISGLSTLK), 157 to 178 (SLRVLLLGKNRIKKISNLENLK), 179 to 200 (NLDVLDLHGNQITKIENVNHLC), 201 to 222 (DLRVLNLARNLLSHVDNLNGLD), 223 to 244 (SLTELNLRHNQITFVRDVDNLP), and 245 to 266 (CLQRLFLSFNNITSFESVSCLA). Positions 279 to 317 (NPIAQESWYKHTVLQNMMQLRQLDMKRITEEERRVASVV) constitute an LRRCT domain. Disordered regions lie at residues 311–332 (RRVASVVPKKEEEKKRESHKQS) and 359–381 (ASTQDRKDSESPPQESCQLDGGN). Positions 319–341 (KKEEEKKRESHKQSLLKEKKRLT) form a coiled coil.

In terms of assembly, part of the neuronal tubulin polyglutamylase complex which contains TPGS1, TPGS2, TTLL1, LRRC49 and NICN1. Interacts with PCM1; TTLL1, TPGS1, TPGS2 and LRRC49.

It is found in the cytoplasm. Its subcellular location is the cytoskeleton. The protein resides in the microtubule organizing center. The protein localises to the centrosome. It localises to the centriolar satellite. Its function is as follows. Subunit of the tubulin polyglutamylase complex (TPGC). The complex mediates cilia and flagella polyglutamylation which is essential for their biogenesis and motility. This Mus musculus (Mouse) protein is Leucine-rich repeat-containing protein 49 (Lrrc49).